The sequence spans 193 residues: Apoptosis-associated speck-like protein containing a CARD (193 aa).

The Pyrin domain occupies 1–91 (MGRARDAILD…AEQLQTTKEE (91 aa)). Glycyl lysine isopeptide (Lys-Gly) (interchain with G-Cter in ubiquitin) cross-links involve residues K55 and K172. Residues 105–193 (STARTGHFVD…PYLVMDLEQS (89 aa)) form the CARD domain. Residue S193 is modified to Phosphoserine.

In terms of assembly, self-associates; enforced oligomerization induces apoptosis, NF-kappa-B regulation and interleukin-1 beta secretion. Homooligomers can form disk-like particles of approximately 12 nm diameter and approximately 1 nm height. Component of several inflammasomes containing one pattern recognition receptor/sensor, such as NLRP2, NLRP3, NLRP6, NLRC4, AIM2, MEFV or NOD2, and probably NLRC4 or NLRP12. Major component of the ASC pyroptosome, a 1-2 um supramolecular assembly (one per macrophage cell) which consists of oligomerized PYCARD dimers and CASP1. Interacts with CASP1 (precursor form); the interaction induces activation of CASP1 leading to the processing of interleukin-1 beta; PYCARD competes with RIPK2 for binding to CASP1. Interacts with NLRP3; the interaction requires the homooligomerization of NLRP3. Interacts with NLRP2, NLRC4, MEFV, CARD16, AIM2, NOD2, RIGI, RIPK2, PYDC1, PYDC2, NLRP10, CHUK, IKBKB and BAX. Interacts with CASP8. Component of the AIM2 PANoptosome complex, a multiprotein complex that drives inflammatory cell death (PANoptosis). Post-translationally, phosphorylated. 'Lys-63'-linked polyubiquitination by TRAF3 is critical for speck formation and inflammasome activation. 'Lys-63'-linked deubiquitinated by USP50; a crucial step for NLRP3-mediated inflammasome activation. 'Lys-63'-linked polyubiquitination by PELI1 is also critical for speck formation and inflammasome activation. Deubiquitinated by USP3 that cleaves 'Lys-48'-linked ubiquitin chains and strengthens its stability by blocking proteasomal degradation. As to expression, expressed in small intestine, colon, thymus, spleen, brain, heart, skeletal muscle, kidney, lung and liver.

It localises to the cytoplasm. Its subcellular location is the inflammasome. The protein resides in the endoplasmic reticulum. The protein localises to the mitochondrion. It is found in the nucleus. Its function is as follows. Functions as a key mediator in apoptosis and inflammation. Promotes caspase-mediated apoptosis involving predominantly caspase-8 and also caspase-9 in a probable cell type-specific manner. Involved in activation of the mitochondrial apoptotic pathway, promotes caspase-8-dependent proteolytic maturation of BID independently of FADD in certain cell types and also mediates mitochondrial translocation of BAX and activates BAX-dependent apoptosis coupled to activation of caspase-9, -2 and -3. Involved in innate immune response by acting as an integral adapter in the assembly of various inflammasomes (NLRP2, NLRP3, NLRP6 and AIM2) which recruit and activate caspase-1 leading to processing and secretion of pro-inflammatory cytokines. Caspase-1-dependent inflammation leads to macrophage pyroptosis, a form of cell death. The function as activating adapter in different types of inflammasomes is mediated by the pyrin and CARD domains and their homotypic interactions. Clustered PYCARD nucleates the formation of caspase-1 filaments through the interaction of their respective CARD domains, acting as a platform for of caspase-1 polymerization. In the NLRC4 inflammasomes seems not be required but facilitates the processing of procaspase-1. In cooperation with NOD2 involved in an inflammasome activated by bacterial muramyl dipeptide leading to caspase-1 activation. May be involved in RIGI-triggered pro-inflammatory responses and inflammasome activation. In collaboration with AIM2 which detects cytosolic double-stranded DNA may also be involved in a caspase-1-independent cell death that involves caspase-8. In adaptive immunity may be involved in maturation of dendritic cells to stimulate T-cell immunity and in cytoskeletal rearrangements coupled to chemotaxis and antigen uptake may be involved in post-transcriptional regulation of the guanine nucleotide exchange factor DOCK2; the latter function is proposed to involve the nuclear form. Also involved in transcriptional activation of cytokines and chemokines independent of the inflammasome; this function may involve AP-1, NF-kappa-B, MAPK and caspase-8 signaling pathways. For regulation of NF-kappa-B activating and inhibiting functions have been reported. Modulates NF-kappa-B induction at the level of the IKK complex by inhibiting kinase activity of CHUK and IKBK. Proposed to compete with RIPK2 for association with CASP1 thereby down-regulating CASP1-mediated RIPK2-dependent NF-kappa-B activation and activating interleukin-1 beta processing. Modulates host resistance to DNA virus infection, probably by inducing the cleavage of and inactivating CGAS in presence of cytoplasmic double-stranded DNA. This chain is Apoptosis-associated speck-like protein containing a CARD (Pycard), found in Mus musculus (Mouse).